The sequence spans 746 residues: PAN2-PAN3 deadenylation complex subunit pan3 (746 aa).

The C3H1-type zinc-finger motif lies at 7 to 35 (PKNQKQCKNIALHGYCRNSDKCEFSHELT). A compositionally biased stretch (low complexity) spans 64–97 (QQQQQQQNSNGNGSNNTATSNNPIISPNSNIASP). Disordered regions lie at residues 64–100 (QQQQ…PLKK), 169–205 (DDQH…NMNN), and 219–275 (NASP…PSLQ). Polar residues predominate over residues 196–205 (NNGIDPNMNN). Residues 221-275 (SPQSYQQQFQQPNPSPQSSSQQQQQQQQQQQQAVYQQQQQQQPSSQPLAQNPSLQ) show a composition bias toward low complexity. Residues 351–610 (DPNDPRIKNI…NIDEVVLMIS (260 aa)) are pseudokinase domain. Residues Arg-407, 457 to 464 (EFFPGSET), and 509 to 510 (SK) each bind ATP. A coiled-coil region spans residues 611 to 649 (GRLLQENNYLHTYTDDLETELSKEYENGRLFRLVTKLGF). Residues 650–746 (INERPLYDMD…SELVSQKSHI (97 aa)) form a knob domain region.

The protein belongs to the protein kinase superfamily. PAN3 family. In terms of assembly, homodimer. Forms a heterotrimer with a catalytic subunit PAN2 to form the poly(A)-nuclease (PAN) deadenylation complex. Interacts (via PAM-2 motif) with poly(A)-binding protein (via PABC domain), conferring substrate specificity of the enzyme complex.

The protein resides in the cytoplasm. Functionally, regulatory subunit of the poly(A)-nuclease (PAN) deadenylation complex, one of two cytoplasmic mRNA deadenylases involved in mRNA turnover. PAN specifically shortens poly(A) tails of RNA and the activity is stimulated by poly(A)-binding protein (PABP). PAN deadenylation is followed by rapid degradation of the shortened mRNA tails by the CCR4-NOT complex. Deadenylated mRNAs are then degraded by two alternative mechanisms, namely exosome-mediated 3'-5' exonucleolytic degradation, or deadenylation-dependent mRNA decaping and subsequent 5'-3' exonucleolytic degradation by XRN1. PAN3 acts as a positive regulator for PAN activity, recruiting the catalytic subunit PAN2 to mRNA via its interaction with RNA and PABP. This is PAN2-PAN3 deadenylation complex subunit pan3 from Dictyostelium discoideum (Social amoeba).